The following is a 74-amino-acid chain: O-conotoxin GeXXXIA (74 aa).

The first 22 residues, 1–22 (MKLTCVLIITVLFLTACQLTTA), serve as a signal peptide directing secretion. Residues 23-33 (VTYSRGEHKHR) constitute a propeptide that is removed on maturation.

This sequence belongs to the conotoxin O1 superfamily. Homodimer; disulfide-linked. Post-translationally, may contain 2 intrachain disulfide bonds and probably one interchain disulfide bond forming the homodimer. In terms of processing, the disulfide pairing is not important for activity towards the different nAChR subtypes, since this peptide without disulfide bond or with different disulfide bonds shows the same activity. In terms of tissue distribution, expressed by the venom duct.

The protein localises to the secreted. Its function is as follows. The activity of this natural homodimer has not been tested due to low abundance. The synthetic linear peptide has been refolded, giving 4 different monomeric isomers (m1 to m4) with 2 disulfide bonds each. All isomers potently inhibit rat alpha-1-beta-1-delta-epsilon/CHRNA1-CHRNB1-CHRND-CHRNE and human alpha-9-alpha-10/CHRNA9-CHRNA10 nicotinic acetylcholine receptors (nAChR). In addition, they show a modest inhibition at human alpha-3-beta-2/CHRNA3-CHRNB2, alpha-3-beta-4/CHRNA3-CHRNB4, alpha-7/CHRNA7, and alpha-4-beta-4/CHRNA4-CHRNB4. The synthetic monomer peptide without disulfide bonds shows a potent activity on alpha-9-alpha-10/CHRNA9 and CHRNA10 (IC(50)=16.2 nM). This linear peptide does not act as a competitive antagonist, or as a channel pore blocker of nAChR. This is O-conotoxin GeXXXIA from Conus generalis (General cone).